The sequence spans 86 residues: MMMIYLSLSLGLLIFSSSNKHLLVTLLSFEFLILLLFSLLVYSNYMSMINAFIFLSVTVCEGALGLSVLVSLVRSSGSDQVQFLNE.

Helical transmembrane passes span 22 to 42 (LLVT…LLVY) and 52 to 72 (FIFL…LVSL).

Belongs to the complex I subunit 4L family.

The protein localises to the mitochondrion membrane. The catalysed reaction is a ubiquinone + NADH + 5 H(+)(in) = a ubiquinol + NAD(+) + 4 H(+)(out). Functionally, core subunit of the mitochondrial membrane respiratory chain NADH dehydrogenase (Complex I) that is believed to belong to the minimal assembly required for catalysis. Complex I functions in the transfer of electrons from NADH to the respiratory chain. The immediate electron acceptor for the enzyme is believed to be ubiquinone. This Artemia salina (Brine shrimp) protein is NADH-ubiquinone oxidoreductase chain 4L (ND4L).